Consider the following 424-residue polypeptide: S-inosyl-L-homocysteine hydrolase (424 aa).

The substrate site is built by D130 and E155. Residue 156-158 (TTT) coordinates NAD(+). The substrate site is built by K185 and D189. NAD(+) contacts are provided by residues N190, 219-224 (GYGWCG), E242, N277, 298-300 (AGH), and N346.

This sequence belongs to the adenosylhomocysteinase family. NAD(+) serves as cofactor.

It localises to the cytoplasm. It catalyses the reaction S-inosyl-L-homocysteine + H2O = L-homocysteine + inosine. It participates in amino-acid biosynthesis; S-adenosyl-L-methionine biosynthesis. In terms of biological role, catalyzes the hydrolysis of S-inosyl-L-homocysteine (SIH) to L-homocysteine (Hcy) and inosine. Likely functions in a S-adenosyl-L-methionine (SAM) recycling pathway from S-adenosyl-L-homocysteine (SAH) produced from SAM-dependent methylation reactions. Can also catalyze the reverse reaction in vitro, i.e. the synthesis of SIH from Hcy and inosine. The polypeptide is S-inosyl-L-homocysteine hydrolase (Methanopyrus kandleri (strain AV19 / DSM 6324 / JCM 9639 / NBRC 100938)).